The sequence spans 445 residues: MTFQNKKTLVAGLGGTGISMIAYLRKNGAEVAAYDAELKAERVAQIGKMFDGLVFYTGRLKDALDNGFDILALSPGISERQPDIEAFKQNGGRVLGDIELLADIVNRRGDKVIAITGSNGKTTVTSLVGYLCIKCGLDTVIAGNIGTPVLEAELQREGKKADVWVLELSSFQLENTESLRPTAATVMNISEDHLDRYDDLLDYAHTKAKIFRGDGVQVLNADDVFCRAMKRAGREVKRFSLEHEADFWLERGTGCLKQGNEDLISTQDIPLQGLHNAANVMAAVALCEAVGLPREALLEHVKTFQGLPHRVEKIGEKNGVVFIDDSKGTNVGATAAAIAGLQNPLFVILGGMGKGQDFTPLRDALKDKAKGVFLIGVDAPQIRRDLDGCGLNLTDCVTLEEAVQTAYAQAEAGDIVLLSPACASFDMFKGYAHRSEVFIEAFKAL.

Gly-117 to Thr-123 is an ATP binding site.

Belongs to the MurCDEF family.

The protein localises to the cytoplasm. It catalyses the reaction UDP-N-acetyl-alpha-D-muramoyl-L-alanine + D-glutamate + ATP = UDP-N-acetyl-alpha-D-muramoyl-L-alanyl-D-glutamate + ADP + phosphate + H(+). It functions in the pathway cell wall biogenesis; peptidoglycan biosynthesis. Its function is as follows. Cell wall formation. Catalyzes the addition of glutamate to the nucleotide precursor UDP-N-acetylmuramoyl-L-alanine (UMA). This chain is UDP-N-acetylmuramoylalanine--D-glutamate ligase, found in Neisseria gonorrhoeae (strain NCCP11945).